A 1399-amino-acid chain; its full sequence is DNA-directed RNA polymerase subunit beta' (1399 aa).

Positions 70, 72, 85, and 88 each coordinate Zn(2+). Asp-460, Asp-462, and Asp-464 together coordinate Mg(2+). 4 residues coordinate Zn(2+): Cys-814, Cys-888, Cys-895, and Cys-898.

Belongs to the RNA polymerase beta' chain family. In terms of assembly, the RNAP catalytic core consists of 2 alpha, 1 beta, 1 beta' and 1 omega subunit. When a sigma factor is associated with the core the holoenzyme is formed, which can initiate transcription. Mg(2+) serves as cofactor. The cofactor is Zn(2+).

It catalyses the reaction RNA(n) + a ribonucleoside 5'-triphosphate = RNA(n+1) + diphosphate. Its function is as follows. DNA-dependent RNA polymerase catalyzes the transcription of DNA into RNA using the four ribonucleoside triphosphates as substrates. This is DNA-directed RNA polymerase subunit beta' from Stutzerimonas stutzeri (strain A1501) (Pseudomonas stutzeri).